Here is a 365-residue protein sequence, read N- to C-terminus: Chorismate synthase (365 aa).

The tract at residues 41–61 (IQKELDRRRPGQSEVSTPRHE) is disordered. Arg48 contributes to the NADP(+) binding site. FMN-binding positions include 125 to 127 (RSS), Gly285, 300 to 304 (KPTPS), and Arg327.

The protein belongs to the chorismate synthase family. FMNH2 serves as cofactor.

The enzyme catalyses 5-O-(1-carboxyvinyl)-3-phosphoshikimate = chorismate + phosphate. Its pathway is metabolic intermediate biosynthesis; chorismate biosynthesis; chorismate from D-erythrose 4-phosphate and phosphoenolpyruvate: step 7/7. Catalyzes the anti-1,4-elimination of the C-3 phosphate and the C-6 proR hydrogen from 5-enolpyruvylshikimate-3-phosphate (EPSP) to yield chorismate, which is the branch point compound that serves as the starting substrate for the three terminal pathways of aromatic amino acid biosynthesis. This reaction introduces a second double bond into the aromatic ring system. This chain is Chorismate synthase, found in Methanosarcina barkeri (strain Fusaro / DSM 804).